Here is a 78-residue protein sequence, read N- to C-terminus: Large ribosomal subunit protein bL28 (78 aa).

A disordered region spans residues 1-25 (MSRVCQVTGKRPAVGNNRSHARNAT).

This sequence belongs to the bacterial ribosomal protein bL28 family.

In Vibrio vulnificus (strain CMCP6), this protein is Large ribosomal subunit protein bL28.